The primary structure comprises 343 residues: Holliday junction branch migration complex subunit RuvB (343 aa).

Residues 1–23 (MSDDFEVVRPEEQAGDEKDRDLR) form a disordered region. Positions 1–183 (MSDDFEVVRP…FGIVQRFEFY (183 aa)) are large ATPase domain (RuvB-L). Residues Leu22, Arg23, Gly64, Lys67, Thr68, Thr69, 130–132 (EDY), Arg173, Tyr183, and Arg220 each bind ATP. Thr68 serves as a coordination point for Mg(2+). The small ATPAse domain (RuvB-S) stretch occupies residues 184–254 (SHEELASIIS…TVAAGLKQLN (71 aa)). The head domain (RuvB-H) stretch occupies residues 257–343 (GLGLETYDRQ…LGDGQEGLFD (87 aa)). 2 residues coordinate DNA: Arg312 and Arg317.

The protein belongs to the RuvB family. As to quaternary structure, homohexamer. Forms an RuvA(8)-RuvB(12)-Holliday junction (HJ) complex. HJ DNA is sandwiched between 2 RuvA tetramers; dsDNA enters through RuvA and exits via RuvB. An RuvB hexamer assembles on each DNA strand where it exits the tetramer. Each RuvB hexamer is contacted by two RuvA subunits (via domain III) on 2 adjacent RuvB subunits; this complex drives branch migration. In the full resolvosome a probable DNA-RuvA(4)-RuvB(12)-RuvC(2) complex forms which resolves the HJ.

Its subcellular location is the cytoplasm. It carries out the reaction ATP + H2O = ADP + phosphate + H(+). Its function is as follows. The RuvA-RuvB-RuvC complex processes Holliday junction (HJ) DNA during genetic recombination and DNA repair, while the RuvA-RuvB complex plays an important role in the rescue of blocked DNA replication forks via replication fork reversal (RFR). RuvA specifically binds to HJ cruciform DNA, conferring on it an open structure. The RuvB hexamer acts as an ATP-dependent pump, pulling dsDNA into and through the RuvAB complex. RuvB forms 2 homohexamers on either side of HJ DNA bound by 1 or 2 RuvA tetramers; 4 subunits per hexamer contact DNA at a time. Coordinated motions by a converter formed by DNA-disengaged RuvB subunits stimulates ATP hydrolysis and nucleotide exchange. Immobilization of the converter enables RuvB to convert the ATP-contained energy into a lever motion, pulling 2 nucleotides of DNA out of the RuvA tetramer per ATP hydrolyzed, thus driving DNA branch migration. The RuvB motors rotate together with the DNA substrate, which together with the progressing nucleotide cycle form the mechanistic basis for DNA recombination by continuous HJ branch migration. Branch migration allows RuvC to scan DNA until it finds its consensus sequence, where it cleaves and resolves cruciform DNA. In Treponema denticola (strain ATCC 35405 / DSM 14222 / CIP 103919 / JCM 8153 / KCTC 15104), this protein is Holliday junction branch migration complex subunit RuvB.